The sequence spans 56 residues: Ferredoxin (56 aa).

4Fe-4S ferredoxin-type domains follow at residues 2 to 28 (AYKI…SQGD) and 29 to 56 (SIFV…PVQE). Residues Cys9, Cys12, Cys15, Cys19, Cys38, Cys41, Cys44, and Cys48 each coordinate [4Fe-4S] cluster.

Requires [4Fe-4S] cluster as cofactor.

Its function is as follows. Ferredoxins are iron-sulfur proteins that transfer electrons in a wide variety of metabolic reactions. This is Ferredoxin from Clostridium pasteurianum.